Here is a 531-residue protein sequence, read N- to C-terminus: Large neutral amino acids transporter small subunit 2 (531 aa).

Residues 1 to 29 (MEKGARQRNNTAKNHPGSDTSPEAEASSG) form a disordered region. The Cytoplasmic segment spans residues 1 to 43 (MEKGARQRNNTAKNHPGSDTSPEAEASSGGGGVALKKEIGLVS). A compositionally biased stretch (polar residues) spans 7-21 (QRNNTAKNHPGSDTS). Residues serine 18, serine 21, serine 27, and serine 28 each carry the phosphoserine modification. A helical transmembrane segment spans residues 44-64 (ACGIIVGNIIGSGIFVSPKGV). Isoleucine 52 serves as a coordination point for L-leucine. The Extracellular portion of the chain corresponds to 65–72 (LENAGSVG). Residues 73-94 (LALIVWIVTGIITAVGALCYAE) traverse the membrane as a helical segment. Residues 95–115 (LGVTIPKSGGDYSYVKDIFGG) are Cytoplasmic-facing. A helical membrane pass occupies residues 116–148 (LAGFLRLWIAVLVIYPTNQAVIALTFSNYVLQP). Asparagine 133 contacts L-tryptophan. Residues 149-156 (LFPTCFPP) are Extracellular-facing. The chain crosses the membrane as a helical span at residues 157-177 (ESGLRLLAAICLLLLTWVNCS). At 178–180 (SVR) the chain is on the cytoplasmic side. The helical transmembrane segment at 181 to 209 (WATRVQDIFTAGKLLALALIIIMGIVQIC) threads the bilayer. The Extracellular portion of the chain corresponds to 210 to 229 (KGEFFWLEPKNAFENFQEPD). A helical membrane pass occupies residues 230 to 251 (IGLVALAFLQGSFAYGGWNFLN). Glycine 245 lines the L-leucine pocket. At 252 to 264 (YVTEELVDPYKNL) the chain is on the cytoplasmic side. Residues 265–286 (PRAIFISIPLVTFVYVFANIAY) form a helical membrane-spanning segment. Over 287–311 (VTAMSPQELLASNAVAVTFGEKLLG) the chain is Extracellular. Residues 312–337 (VMAWIMPISVALSTFGGVNGSLFTSS) traverse the membrane as a helical segment. Over 338–363 (RLFFAGAREGHLPSVLAMIHVKRCTP) the chain is Cytoplasmic. A helical membrane pass occupies residues 364–381 (IPALLFTCLSTLLMLVTS). At 382–385 (DMYT) the chain is on the extracellular side. A helical transmembrane segment spans residues 386-407 (LINYVGFINYLFYGVTVAGQIV). An L-tryptophan-binding site is contributed by asparagine 394. The Cytoplasmic portion of the chain corresponds to 408–422 (LRWKKPDIPRPIKVS). Transmembrane regions (helical) follow at residues 423 to 445 (LLFP…WSEP) and 446 to 465 (VVCG…YFLG). Topologically, residues 466–531 (VYWQHKPKCF…VKDPDSEEQP (66 aa)) are cytoplasmic. A disordered region spans residues 499–531 (NSGAEETTDDLEEQHKPIFKPTPVKDPDSEEQP). Phosphoserine is present on serine 527.

This sequence belongs to the amino acid-polyamine-organocation (APC) superfamily. L-type amino acid transporter (LAT) (TC 2.A.3.8) family. Disulfide-linked heterodimer composed of the catalytic light chain subunit SLC7A8 and the heavy chain subunit SLC3A2. SLC3A2 acts as a chaperone for correct plasma membrane trafficking and stabilization of SLC7A8 and modulates the substrate affinity and specificity of SLC7A8. ICAM-1 associates with the heterodimer SLC3A2/SLC7A8; facilitates leucine uptake. In terms of tissue distribution, strongly expressed in kidney and small intestine. Moderately present in placenta, ovary and brain. Expressed in the inner ear.

The protein localises to the cell membrane. The protein resides in the basolateral cell membrane. The enzyme catalyses L-histidine(in) + L-phenylalanine(out) = L-histidine(out) + L-phenylalanine(in). It carries out the reaction L-tryptophan(in) + L-phenylalanine(out) = L-tryptophan(out) + L-phenylalanine(in). It catalyses the reaction L-isoleucine(in) + L-phenylalanine(out) = L-isoleucine(out) + L-phenylalanine(in). The catalysed reaction is L-valine(in) + L-phenylalanine(out) = L-valine(out) + L-phenylalanine(in). The enzyme catalyses L-leucine(in) + L-phenylalanine(out) = L-leucine(out) + L-phenylalanine(in). It carries out the reaction L-glutamine(in) + L-phenylalanine(out) = L-glutamine(out) + L-phenylalanine(in). It catalyses the reaction L-cysteine(in) + L-phenylalanine(out) = L-cysteine(out) + L-phenylalanine(in). The catalysed reaction is L-phenylalanine(out) + L-methionine(in) = L-phenylalanine(in) + L-methionine(out). The enzyme catalyses L-leucine(out) + L-methionine(in) = L-leucine(in) + L-methionine(out). It carries out the reaction L-cysteine(out) + L-methionine(in) = L-cysteine(in) + L-methionine(out). It catalyses the reaction S-methylmercury-L-cysteine(out) + L-methionine(in) = S-methylmercury-L-cysteine(in) + L-methionine(out). The catalysed reaction is S-methylmercury-L-cysteine(in) + L-leucine(out) = S-methylmercury-L-cysteine(out) + L-leucine(in). The enzyme catalyses S-methylmercury-L-cysteine(in) + L-phenylalanine(out) = S-methylmercury-L-cysteine(out) + L-phenylalanine(in). It carries out the reaction L-phenylalanine(out) + L-serine(in) = L-phenylalanine(in) + L-serine(out). It catalyses the reaction L-phenylalanine(out) + glycine(in) = L-phenylalanine(in) + glycine(out). The catalysed reaction is L-phenylalanine(out) + L-alanine(in) = L-phenylalanine(in) + L-alanine(out). The enzyme catalyses L-tryptophan(in) = L-tryptophan(out). It carries out the reaction 3,3',5-triiodo-L-thyronine(out) = 3,3',5-triiodo-L-thyronine(in). It catalyses the reaction 3,3'-diiodo-L-thyronine(out) = 3,3'-diiodo-L-thyronine(in). The catalysed reaction is L-dopa(out) + L-phenylalanine(in) = L-dopa(in) + L-phenylalanine(out). In terms of biological role, associates with SLC3A2 to form a functional heterodimeric complex that translocates small and large neutral amino acids with broad specificity and a stoichiometry of 1:1. Functions as amino acid antiporter mediating the influx of extracellular essential amino acids mainly in exchange with the efflux of highly concentrated intracellular amino acids. Has relatively symmetrical selectivities but strongly asymmetrical substrate affinities at both the intracellular and extracellular sides of the transporter. This asymmetry allows SLC7A8 to regulate intracellular amino acid pools (mM concentrations) by exchange with external amino acids (uM concentration range), equilibrating the relative concentrations of different amino acids across the plasma membrane instead of mediating their net uptake. May play an essential role in the reabsorption of neutral amino acids from the epithelial cells to the bloodstream in the kidney. Involved in the uptake of methylmercury (MeHg) when administered as the L-cysteine or D,L-homocysteine complexes, and hence plays a role in metal ion homeostasis and toxicity. Involved in the cellular activity of small molecular weight nitrosothiols, via the stereoselective transport of L-nitrosocysteine (L-CNSO) across the transmembrane. Imports the thyroid hormone diiodothyronine (T2) and to a smaller extent triiodothyronine (T3) but not rT 3 or thyroxine (T4). Mediates the uptake of L-DOPA. May participate in auditory function. This is Large neutral amino acids transporter small subunit 2 (Slc7a8) from Mus musculus (Mouse).